We begin with the raw amino-acid sequence, 404 residues long: Argininosuccinate synthase (404 aa).

Residues 10 to 18 (AYSGGVDTS) and Ala-38 contribute to the ATP site. An L-citrulline-binding site is contributed by Tyr-89. Gly-119 lines the ATP pocket. L-aspartate contacts are provided by Thr-121, Asn-125, and Asp-126. Asn-125 contributes to the L-citrulline binding site. L-citrulline is bound by residues Arg-129, Ser-177, Ser-186, Glu-262, and Tyr-274.

The protein belongs to the argininosuccinate synthase family. Type 1 subfamily. In terms of assembly, homotetramer.

Its subcellular location is the cytoplasm. It carries out the reaction L-citrulline + L-aspartate + ATP = 2-(N(omega)-L-arginino)succinate + AMP + diphosphate + H(+). The protein operates within amino-acid biosynthesis; L-arginine biosynthesis; L-arginine from L-ornithine and carbamoyl phosphate: step 2/3. In Prochlorococcus marinus (strain AS9601), this protein is Argininosuccinate synthase.